Here is a 1262-residue protein sequence, read N- to C-terminus: Separin homolog sep-1 (1262 aa).

The region spanning 957 to 1051 is the Peptidase C50 domain; that stretch reads VQNAYYILDP…SVRTIPQALG (95 aa). The active site involves Cys-1040. Positions 1147–1262 are disordered; it reads KDQRNLPQTP…ARTPSRSRNL (116 aa). 2 stretches are compositionally biased toward polar residues: residues 1151–1162 and 1177–1197; these read NLPQTPKTSART and FVTS…NKSP. A compositionally biased stretch (low complexity) spans 1243 to 1262; sequence TPTTRTTRSSARTPSRSRNL.

Forms a complex with securin-like protein ify-1 (via C-terminus). Interaction with ify-1 stabilizes sep-1. Also maintains the complex in the cytoplasm during interphase and recruits it to chromosomes during the first meiotic division. Expressed in oocytes. Expressed in male germline. Expressed in spermatocytes but undetectable in spermatids (at protein level).

It is found in the cytoplasm. The protein resides in the chromosome. Its subcellular location is the cytoplasmic granule. The protein localises to the cytoskeleton. It localises to the microtubule organizing center. It is found in the centrosome. The protein resides in the spindle. Its subcellular location is the cleavage furrow. The protein localises to the midbody. The catalysed reaction is All bonds known to be hydrolyzed by this endopeptidase have arginine in P1 and an acidic residue in P4. P6 is often occupied by an acidic residue or by a hydroxy-amino-acid residue, the phosphorylation of which enhances cleavage.. Its activity is regulated as follows. Probably maintained in an inactive state via its interaction with securin ify-1 which acts as a pseudosubstrate thereby blocking access to the catalytic site. Upon ify-1 degradation at the onset of anaphase, sep-1 is likely to become active. In addition, interaction with ify-1 stabilizes sep-1. In terms of biological role, cysteine protease, which plays a central role in homologous chromosome separation during meiosis I and in sister chromatid separation during embryonic mitosis. Promotes chromosome/sister chromatid segregation by cleaving the scc-1 (mitosis) and rec-8 (meiosis) subunits of the cohesin complex at the onset of anaphase. May cleave histone H3-like protein cpar-1 during meiosis I metaphase-anaphase transition. Promotes cortical granule exocytosis after oocyte fertilization during the first meiotic anaphase. Essential for embryonic cytokinesis by regulating rab-11-positive vesicle trafficking at the plasma membrane at the cleavage furrow and midbody. Regulates centriole segregation during spermatocyte meiosis. Required for embryonic anterior-posterior axis formation. This chain is Separin homolog sep-1, found in Caenorhabditis elegans.